The sequence spans 363 residues: Cytochrome b (363 aa).

4 helical membrane-spanning segments follow: residues 24 to 44 (VGFSLGFFIALQIICGVCLAW), 68 to 90 (FVIRSVHICFTSLLYLLLYIHIF), 105 to 125 (VWFIGFILFVFIIIIAFIGYV), and 171 to 191 (LHVLHVLLPFILLIILILHLF). Heme b contacts are provided by histidine 74 and histidine 88. Heme b contacts are provided by histidine 175 and histidine 189. Histidine 194 contributes to the a ubiquinone binding site. The next 4 membrane-spanning stretches (helical) occupy residues 219 to 239 (FYLRDMFLAFSILLCMMYVIF), 287 to 307 (FLMVILLFSLFLFILNCILWF), 321 to 341 (LILFYSIWMSGFLALYVVLAY), and 342 to 362 (PIWMELQYWVLLLFLLIVCRL).

This sequence belongs to the cytochrome b family. As to quaternary structure, the main subunits of complex b-c1 are: cytochrome b, cytochrome c1 and the Rieske protein. Heme b is required as a cofactor.

It localises to the mitochondrion inner membrane. Its function is as follows. Component of the ubiquinol-cytochrome c reductase complex (complex III or cytochrome b-c1 complex) that is part of the mitochondrial respiratory chain. The b-c1 complex mediates electron transfer from ubiquinol to cytochrome c. Contributes to the generation of a proton gradient across the mitochondrial membrane that is then used for ATP synthesis. This is Cytochrome b (MT-CYB) from Trypanosoma brucei brucei.